The sequence spans 182 residues: Oligoribonuclease (182 aa).

In terms of domain architecture, Exonuclease spans 8 to 171; it reads LIWIDLEMTG…DDIRESIKEL (164 aa). The active site involves tyrosine 129.

The protein belongs to the oligoribonuclease family.

The protein localises to the cytoplasm. 3'-to-5' exoribonuclease specific for small oligoribonucleotides. The chain is Oligoribonuclease from Actinobacillus succinogenes (strain ATCC 55618 / DSM 22257 / CCUG 43843 / 130Z).